The primary structure comprises 779 residues: Tricorn protease-interacting factor F3 (779 aa).

Substrate contacts are provided by residues glutamate 102 and 231–235 (GAMEN). Histidine 266 lines the Zn(2+) pocket. Glutamate 267 serves as the catalytic Proton acceptor. Residues histidine 270 and glutamate 289 each contribute to the Zn(2+) site.

The protein belongs to the peptidase M1 family. As to quaternary structure, part of the tricorn proteolytic complex. The cofactor is Zn(2+).

It is found in the cytoplasm. Functionally, proteases F1, F2 and F3 degrade oligopeptides produced by Tricorn (themselves probably produced by the proteasome), yielding free amino acids. The chain is Tricorn protease-interacting factor F3 (trf3) from Thermoplasma volcanium (strain ATCC 51530 / DSM 4299 / JCM 9571 / NBRC 15438 / GSS1).